We begin with the raw amino-acid sequence, 663 residues long: Transcriptional repressor CTCFL (663 aa).

Over residues 24-51 (EKGLKEEEKDGVCREKDHRSPSELEAER) the composition is skewed to basic and acidic residues. 2 disordered regions span residues 24-55 (EKGLKEEEKDGVCREKDHRSPSELEAERTSGA) and 221-250 (NSNVEEQEDQPTAGQADAEKAKSTKNQRKT). 10 C2H2-type zinc fingers span residues 257–279 (FHCDVCMFTSSRMSSFNRHMKTH), 285–307 (HLCHLCLKTFRTVTLLRNHVNTH), 313–336 (YKCNDCNMAFVTSGELVRHRRYKH), 342–364 (FKCSMCKYASVEASKLKRHVRSH), 370–392 (FQCCQCSYASRDTYKLKRHMRTH), 398–421 (YECHICHTRFTQSGTMKIHILQKH), 428–451 (YQCPHCATIIARKSDLRVHMRNLH), 458–480 (LKCRYCSAVFHERYALIQHQKTH), 486–508 (FKCKHCSYACKQERHMTAHIRTH), and 514–537 (FTCLSCNKCFRQKQLLNAHFRKYH). The C2H2-type 11; atypical zinc-finger motif lies at 546 to 568 (YKCSKCGKGFSRWINLHRHSEKC). Positions 569–630 (GSGEAKSAAS…STTKGEQFPG (62 aa)) are disordered. The span at 580 to 590 (KGRRTRKRKQT) shows a compositional bias: basic residues. Residues 594–607 (EATKGQKEAAKGWK) are compositionally biased toward basic and acidic residues. The span at 608-620 (EAANGDEAAAEEA) shows a compositional bias: low complexity.

The protein belongs to the CTCF zinc-finger protein family. Interacts with histones, PRMT7 and SETD1A. Interacts (via N-terminus) with BAG6/BAT3. As to expression, testis specific. Specifically expressed in primary spermatocytes.

Its subcellular location is the cytoplasm. It is found in the nucleus. Its function is as follows. Testis-specific DNA binding protein responsible for insulator function, nuclear architecture and transcriptional control, which probably acts by recruiting epigenetic chromatin modifiers. Plays a key role in gene imprinting in male germline, by participating in the establishment of differential methylation at the IGF2/H19 imprinted control region (ICR). Directly binds the unmethylated H19 ICR and recruits the PRMT7 methyltransferase, leading to methylate histone H4 'Arg-3' to form H4R3sme2. This probably leads to recruit de novo DNA methyltransferases at these sites. Seems to act as tumor suppressor. In association with DNMT1 and DNMT3B, involved in activation of BAG1 gene expression by binding to its promoter. Required for dimethylation of H3 lysine 4 (H3K4me2) of MYC and BRCA1 promoters. This Homo sapiens (Human) protein is Transcriptional repressor CTCFL (CTCFL).